Consider the following 506-residue polypeptide: Maturase K (506 aa).

This sequence belongs to the intron maturase 2 family. MatK subfamily.

It is found in the plastid. The protein localises to the chloroplast. Usually encoded in the trnK tRNA gene intron. Probably assists in splicing its own and other chloroplast group II introns. The polypeptide is Maturase K (Erica tetralix (Cross-leaved heath)).